We begin with the raw amino-acid sequence, 357 residues long: Arginine kinase (357 aa).

The residue at position 2 (alanine 2) is an N-acetylalanine. Residues 9–91 form the Phosphagen kinase N-terminal domain; the sequence is KLEEGFKKLE…FDPIIEDYHK (83 aa). 64–68 contacts L-arginine; that stretch reads GVGVY. The region spanning 119 to 356 is the Phosphagen kinase C-terminal domain; that stretch reads FVISTRVRCG…LELIKIEKEM (238 aa). Residues 122–126 and histidine 185 contribute to the ATP site; that span reads STRVR. Residue glutamate 225 coordinates L-arginine. ATP is bound at residue arginine 229. Residue cysteine 271 coordinates L-arginine. Residues 280-284 and 309-314 each bind ATP; these read RASVH and RGTRGE. Glutamate 314 contributes to the L-arginine binding site.

Belongs to the ATP:guanido phosphotransferase family.

The enzyme catalyses L-arginine + ATP = N(omega)-phospho-L-arginine + ADP + H(+). The chain is Arginine kinase from Callinectes sapidus (Blue crab).